Reading from the N-terminus, the 113-residue chain is T cell receptor alpha variable 36/delta variable 7 (113 aa).

A signal peptide spans Met1–Ser21. Residues Asp23 to Glu113 enclose the Ig-like domain. N-linked (GlcNAc...) asparagine glycosylation is found at Asn43 and Asn96. Cys44 and Cys110 are joined by a disulfide.

In terms of assembly, alpha-beta TR is a heterodimer composed of an alpha and beta chain; disulfide-linked. The alpha-beta TR is associated with the transmembrane signaling CD3 coreceptor proteins to form the TR-CD3 (TcR or TCR). The assembly of alpha-beta TR heterodimers with CD3 occurs in the endoplasmic reticulum where a single alpha-beta TR heterodimer associates with one CD3D-CD3E heterodimer, one CD3G-CD3E heterodimer and one CD247 homodimer forming a stable octameric structure. CD3D-CD3E and CD3G-CD3E heterodimers preferentially associate with TR alpha and TR beta chains, respectively. The association of the CD247 homodimer is the last step of TcR assembly in the endoplasmic reticulum and is required for transport to the cell surface.

Its subcellular location is the cell membrane. In terms of biological role, v region of the variable domain of T cell receptor (TR) alpha chain that participates in the antigen recognition. Alpha-beta T cell receptors are antigen specific receptors which are essential to the immune response and are present on the cell surface of T lymphocytes. Recognize peptide-major histocompatibility (MH) (pMH) complexes that are displayed by antigen presenting cells (APC), a prerequisite for efficient T cell adaptive immunity against pathogens. Binding of alpha-beta TR to pMH complex initiates TR-CD3 clustering on the cell surface and intracellular activation of LCK that phosphorylates the ITAM motifs of CD3G, CD3D, CD3E and CD247 enabling the recruitment of ZAP70. In turn ZAP70 phosphorylates LAT, which recruits numerous signaling molecules to form the LAT signalosome. The LAT signalosome propagates signal branching to three major signaling pathways, the calcium, the mitogen-activated protein kinase (MAPK) kinase and the nuclear factor NF-kappa-B (NF-kB) pathways, leading to the mobilization of transcription factors that are critical for gene expression and essential for T cell growth and differentiation. The T cell repertoire is generated in the thymus, by V-(D)-J rearrangement. This repertoire is then shaped by intrathymic selection events to generate a peripheral T cell pool of self-MH restricted, non-autoaggressive T cells. Post-thymic interaction of alpha-beta TR with the pMH complexes shapes TR structural and functional avidity. The protein is T cell receptor alpha variable 36/delta variable 7 of Homo sapiens (Human).